Here is a 517-residue protein sequence, read N- to C-terminus: Glutamyl-tRNA(Gln) amidotransferase subunit A, mitochondrial (517 aa).

Catalysis depends on charge relay system residues K58 and S131. Residues F106–S132 form a disordered region. S155 (acyl-ester intermediate) is an active-site residue.

The protein belongs to the amidase family. GatA subfamily. As to quaternary structure, subunit of the heterotrimeric GatCAB amidotransferase (AdT) complex, composed of A, B and C subunits.

The protein resides in the mitochondrion. The catalysed reaction is L-glutamyl-tRNA(Gln) + L-glutamine + ATP + H2O = L-glutaminyl-tRNA(Gln) + L-glutamate + ADP + phosphate + H(+). Allows the formation of correctly charged Gln-tRNA(Gln) through the transamidation of misacylated Glu-tRNA(Gln) in the mitochondria. The reaction takes place in the presence of glutamine and ATP through an activated gamma-phospho-Glu-tRNA(Gln). This chain is Glutamyl-tRNA(Gln) amidotransferase subunit A, mitochondrial, found in Pyricularia oryzae (strain 70-15 / ATCC MYA-4617 / FGSC 8958) (Rice blast fungus).